The following is a 276-amino-acid chain: NADPH-dependent 7-cyano-7-deazaguanine reductase (276 aa).

83–85 (IES) contacts substrate. NADPH is bound at residue 85-86 (SK). Catalysis depends on cysteine 184, which acts as the Thioimide intermediate. Aspartate 191 functions as the Proton donor in the catalytic mechanism. 223-224 (HE) is a substrate binding site. 252–253 (RG) serves as a coordination point for NADPH.

The protein belongs to the GTP cyclohydrolase I family. QueF type 2 subfamily. As to quaternary structure, homodimer.

The protein localises to the cytoplasm. It catalyses the reaction 7-aminomethyl-7-carbaguanine + 2 NADP(+) = 7-cyano-7-deazaguanine + 2 NADPH + 3 H(+). The protein operates within tRNA modification; tRNA-queuosine biosynthesis. Its function is as follows. Catalyzes the NADPH-dependent reduction of 7-cyano-7-deazaguanine (preQ0) to 7-aminomethyl-7-deazaguanine (preQ1). The sequence is that of NADPH-dependent 7-cyano-7-deazaguanine reductase from Pseudomonas putida (strain ATCC 700007 / DSM 6899 / JCM 31910 / BCRC 17059 / LMG 24140 / F1).